Reading from the N-terminus, the 585-residue chain is Probable G-protein coupled receptor Mth-like 10 (585 aa).

Positions 1–32 are cleaved as a signal peptide; sequence MPKKIHQPGGSLYCGVTLLGVLCLVVFRLIPG. Topologically, residues 33-250 are extracellular; sequence IPFGTYVMAE…DHSTVKIINS (218 aa). 5 disulfide bridges follow: cysteine 56–cysteine 110, cysteine 112–cysteine 117, cysteine 121–cysteine 216, cysteine 122–cysteine 135, and cysteine 177–cysteine 236. N-linked (GlcNAc...) asparagine glycosylation is found at asparagine 63 and asparagine 72. 5 N-linked (GlcNAc...) asparagine glycosylation sites follow: asparagine 142, asparagine 152, asparagine 157, asparagine 198, and asparagine 223. Residues 251–271 traverse the membrane as a helical segment; it reads YAMMFSIPFMMLTIAVYLLIP. At 272-280 the chain is on the cytoplasmic side; sequence ELRNQHGKS. The helical transmembrane segment at 281 to 301 threads the bilayer; sequence LVCYLIGLSVGYSSLCYVQLY. Topologically, residues 302–312 are extracellular; the sequence is QVDATGVTCKV. The helical transmembrane segment at 313–333 threads the bilayer; sequence FGYTAYFFFMGAYMWLSVISF. The Cytoplasmic segment spans residues 334–353; sequence DLWHNFRGTRGINRFQEKKR. The helical transmembrane segment at 354–374 threads the bilayer; the sequence is FLFYSLYSWGIALVFLAFTYC. Topologically, residues 375 to 404 are extracellular; it reads AQQLTNLPANLKPGIGDGVYCWLDMSNWAA. The chain crosses the membrane as a helical span at residues 405-425; the sequence is MIYFYGPILAIVVANTIMFIM. At 426–466 the chain is on the cytoplasmic side; the sequence is TAIKIHGVQREMARIIASENSTKNLRTEKDKRFYRAWSNYR. A helical membrane pass occupies residues 467 to 487; sequence FGLFLRLFLIMGITWLTELIS. At 488–498 the chain is on the extracellular side; that stretch reads YFVGSDKGWSK. The chain crosses the membrane as a helical span at residues 499–519; that stretch reads LFYISDLANAMQGFLIFMLFV. At 520–585 the chain is on the cytoplasmic side; the sequence is MKKKVKHLIT…VDPQKTTIFR (66 aa).

This sequence belongs to the G-protein coupled receptor 2 family. Mth subfamily.

The protein resides in the cell membrane. In Drosophila melanogaster (Fruit fly), this protein is Probable G-protein coupled receptor Mth-like 10 (mthl10).